An 804-amino-acid chain; its full sequence is Endoplasmin (804 aa).

A signal peptide spans 1 to 21 (MRVLWVLGLCCVLLTFGFVRA). The SRT pseudosubstrate motif motif lies at 42 to 44 (SRT). A glycan (N-linked (GlcNAc...) asparagine) is linked at Asn-62. Ser-64 is subject to Phosphoserine. An N-linked (GlcNAc...) asparagine glycan is attached at Asn-107. ATP contacts are provided by Asn-107, Asp-149, and Asn-162. N6-(2-hydroxyisobutyryl)lysine is present on Lys-168. Ser-172 is modified (phosphoserine). Residue Phe-199 participates in ATP binding. A glycan (N-linked (GlcNAc...) asparagine) is linked at Asn-217. Residues 288–323 (TVEEPLEEDETAQEEKEEADDEAAVEEEEEEKKPKT) are disordered. The span at 289–317 (VEEPLEEDETAQEEKEEADDEAAVEEEEE) shows a compositional bias: acidic residues. Ser-403 carries the post-translational modification Phosphoserine. The residue at position 404 (Lys-404) is an N6-succinyllysine. An N-linked (GlcNAc...) asparagine glycan is attached at Asn-445. Ser-447 is subject to Phosphoserine. The residue at position 479 (Lys-479) is an N6-acetyllysine. Residues Asn-481 and Asn-502 are each glycosylated (N-linked (GlcNAc...) asparagine). Lys-633 is subject to N6-succinyllysine. The interval 749-804 (IDPEAQVEEEPEEEPEDTTEDTTDDSEQDEEETDAGAEEEEEEQETEKEPTEKDEL) is disordered. Residues 753-794 (AQVEEEPEEEPEDTTEDTTDDSEQDEEETDAGAEEEEEEQET) are compositionally biased toward acidic residues. Positions 795–804 (EKEPTEKDEL) are enriched in basic and acidic residues. A Prevents secretion from ER motif is present at residues 801 to 804 (KDEL).

The protein belongs to the heat shock protein 90 family. As to quaternary structure, homodimer; disulfide-linked. Component of an EIF2 complex at least composed of CELF1/CUGBP1, CALR, CALR3, EIF2S1, EIF2S2, HSP90B1 and HSPA5. Part of a large chaperone multiprotein complex comprising DNAJB11, HSP90B1, HSPA5, HYOU, PDIA2, PDIA4, PDIA6, PPIB, SDF2L1, UGGT1 and very small amounts of ERP29, but not, or at very low levels, CALR nor CANX. Interacts with AIMP1; regulates its retention in the endoplasmic reticulum. Hyperglycosylated form interacts with OS9; promoting its degradation by the endoplasmic reticulum associated degradation (ERAD). Interacts with CNPY3. This interaction is disrupted in the presence of ATP. Interacts with TLR4 and TLR9, but not with TLR3. Interacts with MZB1 in a calcium-dependent manner. Interacts with METTL23. Interacts with IL1B; the interaction facilitates cargo translocation into the ERGIC. Interacts with EIF2AK3. Post-translationally, phosphorylated by CK2. In terms of processing, N-glycosylated cotranslationally at Asn-217 by STT3A-containing OST-A complex: this glycosylation is constitutive. In response to various stress, 5 additional facultative sites (Asn-62, Asn-107, Asn-445, Asn-481 and Asn-502) can be glycosylated post-translationally by STT3B-containing OST-B complex, leading to a hyperglycosylated form that is degraded by the ER-associated degradation (ERAD) pathway. In normal conditions, the OST-A complex together with CCDC134 prevent glycosylation at facultative sites during protein folding, thereby preventing hyperglycosylation. Mechanistically, nascent HSP90B1 is tethered during translation to a specialized CCDC134-containing translocon that forms a microenvironment for its folding, in which STT3A associates with the SRT pseudosubstrate motif, and prevents access to facultative glycosylation sites until folding is completed, rendering its facultative sites inaccessible to the OST-B complex.

It localises to the endoplasmic reticulum lumen. Its subcellular location is the sarcoplasmic reticulum lumen. The protein resides in the melanosome. The enzyme catalyses ATP + H2O = ADP + phosphate + H(+). In terms of biological role, ATP-dependent chaperone involved in the processing of proteins in the endoplasmic reticulum, regulating their transport. Together with MESD, acts as a modulator of the Wnt pathway by promoting the folding of LRP6, a coreceptor of the canonical Wnt pathway. When associated with CNPY3, required for proper folding of Toll-like receptors. Promotes folding and trafficking of TLR4 to the cell surface. May participate in the unfolding of cytosolic leaderless cargos (lacking the secretion signal sequence) such as the interleukin 1/IL-1 to facilitate their translocation into the ERGIC (endoplasmic reticulum-Golgi intermediate compartment) and secretion; the translocation process is mediated by the cargo receptor TMED10. This Rattus norvegicus (Rat) protein is Endoplasmin.